We begin with the raw amino-acid sequence, 173 residues long: Small ribosomal subunit protein uS5 (173 aa).

Residues 18 to 81 enclose the S5 DRBM domain; that stretch reads LREKMIAVNR…EQARRGMFKV (64 aa).

It belongs to the universal ribosomal protein uS5 family. As to quaternary structure, part of the 30S ribosomal subunit. Contacts proteins S4 and S8.

With S4 and S12 plays an important role in translational accuracy. Its function is as follows. Located at the back of the 30S subunit body where it stabilizes the conformation of the head with respect to the body. This is Small ribosomal subunit protein uS5 from Bordetella petrii (strain ATCC BAA-461 / DSM 12804 / CCUG 43448).